A 262-amino-acid polypeptide reads, in one-letter code: MTKQFAVIGNPIEQSRSPELHHAFAEKTGVDLNYQKRLAPLDGFESSMRSFFAKGGSGMNVTVPFKEQAFALCDVLTERAQIAKAVNTLWMENGKLHGDNTDGQGLVAAIQALEWNLENTTILILGAGGATRGVIYPLVQAGAKKIVIANRTLARAEQLVDDLKTAVPQAQLQAISLNDLEGDFDIVINATSASLSGDALQLPEKLKFKYAYEMAYGKPSSFLDQAKQRNVPYAEGFGMLVGQAIEAFSIWNNVRPQLKDFL.

Residues 15–17 (SRS) and threonine 62 each bind shikimate. The active-site Proton acceptor is the lysine 66. Glutamate 78 is an NADP(+) binding site. Residues asparagine 87 and aspartate 102 each contribute to the shikimate site. NADP(+)-binding positions include 126–130 (GAGGA), 150–155 (NRTLAR), and methionine 214. Tyrosine 216 is a binding site for shikimate. Residue glycine 236 coordinates NADP(+).

Belongs to the shikimate dehydrogenase family. In terms of assembly, homodimer.

It carries out the reaction shikimate + NADP(+) = 3-dehydroshikimate + NADPH + H(+). Its pathway is metabolic intermediate biosynthesis; chorismate biosynthesis; chorismate from D-erythrose 4-phosphate and phosphoenolpyruvate: step 4/7. Involved in the biosynthesis of the chorismate, which leads to the biosynthesis of aromatic amino acids. Catalyzes the reversible NADPH linked reduction of 3-dehydroshikimate (DHSA) to yield shikimate (SA). The chain is Shikimate dehydrogenase (NADP(+)) from Acinetobacter baumannii (strain ACICU).